The sequence spans 387 residues: Succinate--CoA ligase [ADP-forming] subunit beta (387 aa).

Residues K46, 53–55 (GRG), E99, A102, and E107 each bind ATP. N199 and D213 together coordinate Mg(2+). Residues N264 and 321 to 323 (GIV) contribute to the substrate site.

The protein belongs to the succinate/malate CoA ligase beta subunit family. In terms of assembly, heterotetramer of two alpha and two beta subunits. The cofactor is Mg(2+).

It catalyses the reaction succinate + ATP + CoA = succinyl-CoA + ADP + phosphate. The enzyme catalyses GTP + succinate + CoA = succinyl-CoA + GDP + phosphate. Its pathway is carbohydrate metabolism; tricarboxylic acid cycle; succinate from succinyl-CoA (ligase route): step 1/1. Its function is as follows. Succinyl-CoA synthetase functions in the citric acid cycle (TCA), coupling the hydrolysis of succinyl-CoA to the synthesis of either ATP or GTP and thus represents the only step of substrate-level phosphorylation in the TCA. The beta subunit provides nucleotide specificity of the enzyme and binds the substrate succinate, while the binding sites for coenzyme A and phosphate are found in the alpha subunit. The polypeptide is Succinate--CoA ligase [ADP-forming] subunit beta (Campylobacter jejuni (strain RM1221)).